A 426-amino-acid polypeptide reads, in one-letter code: Transcriptional enhancer factor TEF-1 (426 aa).

Met1 carries the post-translational modification N-acetylmethionine. A compositionally biased stretch (polar residues) spans 1 to 12 (MEPSSWSGSESP). Positions 1–31 (MEPSSWSGSESPAENMERMSDSADKPIDNDA) are disordered. Ser11 is subject to Phosphoserine. Positions 15 to 28 (NMERMSDSADKPID) are enriched in basic and acidic residues. A DNA-binding region (TEA) is located at residues 28–104 (DNDAEGVWSP…QVLARRKSRD (77 aa)). Lys108 carries the post-translational modification N6-lactoyllysine. A transcriptional activation region spans residues 167–426 (GSSQDVKPFV…QHHIYRLVKD (260 aa)).

In terms of assembly, interacts with YAP1 and WWTR1/TAZ. Post-translationally, lactylation by AARS1 promotes nuclear localization and stabilization of YAP1, leading to increased Hippo signaling pathway. Delactylated by SIRT1. Preferentially expressed in skeletal muscle. Lower levels in pancreas, placenta, and heart.

The protein resides in the nucleus. In terms of biological role, transcription factor which plays a key role in the Hippo signaling pathway, a pathway involved in organ size control and tumor suppression by restricting proliferation and promoting apoptosis. The core of this pathway is composed of a kinase cascade wherein MST1/MST2, in complex with its regulatory protein SAV1, phosphorylates and activates LATS1/2 in complex with its regulatory protein MOB1, which in turn phosphorylates and inactivates YAP1 oncoprotein and WWTR1/TAZ. Acts by mediating gene expression of YAP1 and WWTR1/TAZ, thereby regulating cell proliferation, migration and epithelial mesenchymal transition (EMT) induction. Binds specifically and cooperatively to the SPH and GT-IIC 'enhansons' (5'-GTGGAATGT-3') and activates transcription in vivo in a cell-specific manner. The activation function appears to be mediated by a limiting cell-specific transcriptional intermediary factor (TIF). Involved in cardiac development. Binds to the M-CAT motif. The sequence is that of Transcriptional enhancer factor TEF-1 (TEAD1) from Homo sapiens (Human).